Consider the following 1260-residue polypeptide: ATP-dependent helicase/deoxyribonuclease subunit B (1260 aa).

The protein belongs to the helicase family. AddB/RexB type 2 subfamily. As to quaternary structure, heterodimer of AddA and RexB. Requires Mg(2+) as cofactor.

Functionally, the heterodimer acts as both an ATP-dependent DNA helicase and an ATP-dependent, dual-direction single-stranded exonuclease. Recognizes the chi site generating a DNA molecule suitable for the initiation of homologous recombination. This subunit has 5' -&gt; 3' nuclease activity but not helicase activity. The protein is ATP-dependent helicase/deoxyribonuclease subunit B of Limosilactobacillus reuteri (strain DSM 20016) (Lactobacillus reuteri).